The primary structure comprises 186 residues: Peptidyl-tRNA hydrolase (186 aa).

Tyrosine 14 is a tRNA binding site. Histidine 19 acts as the Proton acceptor in catalysis. Phenylalanine 64, asparagine 66, and asparagine 112 together coordinate tRNA.

Belongs to the PTH family. Monomer.

It localises to the cytoplasm. It carries out the reaction an N-acyl-L-alpha-aminoacyl-tRNA + H2O = an N-acyl-L-amino acid + a tRNA + H(+). Hydrolyzes ribosome-free peptidyl-tRNAs (with 1 or more amino acids incorporated), which drop off the ribosome during protein synthesis, or as a result of ribosome stalling. Its function is as follows. Catalyzes the release of premature peptidyl moieties from peptidyl-tRNA molecules trapped in stalled 50S ribosomal subunits, and thus maintains levels of free tRNAs and 50S ribosomes. This Listeria monocytogenes serotype 4a (strain HCC23) protein is Peptidyl-tRNA hydrolase.